Consider the following 426-residue polypeptide: 3-phosphoshikimate 1-carboxyvinyltransferase (426 aa).

Residues lysine 22, serine 23, and arginine 27 each contribute to the 3-phosphoshikimate site. Lysine 22 provides a ligand contact to phosphoenolpyruvate. Phosphoenolpyruvate-binding residues include glycine 96 and arginine 124. Residues serine 170, serine 171, glutamine 172, serine 198, aspartate 314, asparagine 337, and lysine 341 each contribute to the 3-phosphoshikimate site. Phosphoenolpyruvate is bound at residue glutamine 172. Catalysis depends on aspartate 314, which acts as the Proton acceptor. Phosphoenolpyruvate is bound by residues arginine 345, arginine 387, and lysine 412.

This sequence belongs to the EPSP synthase family. As to quaternary structure, monomer.

The protein resides in the cytoplasm. It carries out the reaction 3-phosphoshikimate + phosphoenolpyruvate = 5-O-(1-carboxyvinyl)-3-phosphoshikimate + phosphate. Its pathway is metabolic intermediate biosynthesis; chorismate biosynthesis; chorismate from D-erythrose 4-phosphate and phosphoenolpyruvate: step 6/7. Functionally, catalyzes the transfer of the enolpyruvyl moiety of phosphoenolpyruvate (PEP) to the 5-hydroxyl of shikimate-3-phosphate (S3P) to produce enolpyruvyl shikimate-3-phosphate and inorganic phosphate. The chain is 3-phosphoshikimate 1-carboxyvinyltransferase from Shewanella loihica (strain ATCC BAA-1088 / PV-4).